The chain runs to 216 residues: Somatotropin (216 aa).

A signal peptide spans 1–26 (MAAGPRTSVLLAFGLLCLPWPQDVGA). His45 is a Zn(2+) binding site. Cys78 and Cys189 are disulfide-bonded. A Phosphoserine modification is found at Ser131. Glu198 is a binding site for Zn(2+). Cysteines 206 and 214 form a disulfide.

It belongs to the somatotropin/prolactin family.

It localises to the secreted. Plays an important role in growth control. Its major role in stimulating body growth is to stimulate the liver and other tissues to secrete IGF1. It stimulates both the differentiation and proliferation of myoblasts. It also stimulates amino acid uptake and protein synthesis in muscle and other tissues. The sequence is that of Somatotropin (GH1) from Equus caballus (Horse).